Here is a 113-residue protein sequence, read N- to C-terminus: SLYAPSAVVLSIGKGDASGPVTVLRATTLSCAPVPGGTHPAPEAACAELKAGFAGGGFGGLLASPDPDRACPQHFDPVTVTLDGVWEGARTSWQHTFSNACVMGTTLDGGEAF.

Cystine bridges form between cysteine 31–cysteine 46 and cysteine 71–cysteine 101.

This sequence belongs to the protease inhibitor I16 (SSI) family. Homodimer.

The protein localises to the secreted. Inhibitor of subtilisin BPN'. The chain is Subtilisin inhibitor-like protein 15 from Streptomyces bikiniensis.